The sequence spans 365 residues: 3-dehydroquinate synthase (365 aa).

Residues 106–110 (GVIGD), 130–131 (TT), lysine 142, lysine 151, and 169–172 (FFAT) contribute to the NAD(+) site. Residues glutamate 184, histidine 247, and histidine 264 each coordinate Zn(2+).

The protein belongs to the sugar phosphate cyclases superfamily. Dehydroquinate synthase family. Co(2+) serves as cofactor. It depends on Zn(2+) as a cofactor. The cofactor is NAD(+).

The protein localises to the cytoplasm. The catalysed reaction is 7-phospho-2-dehydro-3-deoxy-D-arabino-heptonate = 3-dehydroquinate + phosphate. Its pathway is metabolic intermediate biosynthesis; chorismate biosynthesis; chorismate from D-erythrose 4-phosphate and phosphoenolpyruvate: step 2/7. Functionally, catalyzes the conversion of 3-deoxy-D-arabino-heptulosonate 7-phosphate (DAHP) to dehydroquinate (DHQ). The polypeptide is 3-dehydroquinate synthase (Listeria monocytogenes serotype 4a (strain HCC23)).